Consider the following 400-residue polypeptide: NADPH dehydrogenase 3 (400 aa).

The FMN site is built by T38 and Q115. Positions 192 and 195 each coordinate substrate. Y197 acts as the Proton donor in catalysis. FMN is bound by residues R244 and R349. A substrate-binding site is contributed by Y376.

Homodimer or heterodimer with OYE2. The cofactor is FMN.

The enzyme catalyses A + NADPH + H(+) = AH2 + NADP(+). In terms of biological role, flavin-dependent enoate reductase that catalyzes the chemo- and stereoslective hydrogenation of electron-poor alkenes. The enzyme is reduced by NADPH, and oxygen, quinones, and alpha,beta-unsaturated aldehydes and ketones can act as electron acceptors to complete catalytic turnover. The physiological oxidant remains elusive. Has a prooxidant activity, increasing reactive oxygen species (ROS) levels when overexpressed. Formation of OYE2-OYE3 heterodimers contribute to the induction of programmed cell death upon oxidative stress. The sequence is that of NADPH dehydrogenase 3 from Saccharomyces cerevisiae (strain ATCC 204508 / S288c) (Baker's yeast).